The following is a 126-amino-acid chain: Large ribosomal subunit protein bL17 (126 aa).

Belongs to the bacterial ribosomal protein bL17 family. As to quaternary structure, part of the 50S ribosomal subunit. Contacts protein L32.

The polypeptide is Large ribosomal subunit protein bL17 (Xylella fastidiosa (strain Temecula1 / ATCC 700964)).